The chain runs to 579 residues: Nuclear receptor subfamily 1 group D member 2 (579 aa).

The interval 1-60 is required for phosphorylation by CSNK1E and cytoplasmic localization; sequence MEVNAGGVIAYISSSSSASSPASCHSEGSENSFQSSSSSVPSSPNSSNSDTNGNPKNGDL. The interval 1–99 is modulating; sequence MEVNAGGVIA…HSGVTKFSGM (99 aa). Residues 13-54 are compositionally biased toward low complexity; the sequence is SSSSSASSPASCHSEGSENSFQSSSSSVPSSPNSSNSDTNGN. The segment at 13–61 is disordered; sequence SSSSSASSPASCHSEGSENSFQSSSSSVPSSPNSSNSDTNGNPKNGDLA. A Phosphoserine; by GSK3-beta modification is found at serine 46. The segment at residues 100 to 176 is a DNA-binding region (nuclear receptor); it reads VLLCKVCGDV…VGMSRDAVRF (77 aa). 2 consecutive NR C4-type zinc fingers follow at residues 103–123 and 140–164; these read CKVCGDVASGFHYGVHACEGC and CLKNENCSIMRMNRNRCQQCRFKKC. Lysine 162 and lysine 163 each carry N6-acetyllysine; by KAT5. The disordered stretch occupies residues 222–250; it reads PAQEQLRPKPQLEQENIKSSSPPSSDFAK. Residues 227-237 show a composition bias toward basic and acidic residues; the sequence is LRPKPQLEQEN. 2 disulfide bridges follow: cysteine 337/cysteine 343 and cysteine 374/cysteine 384. The NR LBD domain occupies 369–579; that stretch reads KNSYLCNTGG…EELLAFKVHP (211 aa). Residues cysteine 384 and histidine 568 each contribute to the heme site. An interaction with ZNHIT1 region spans residues 397–579; sequence SGHEIWEEFS…EELLAFKVHP (183 aa).

This sequence belongs to the nuclear hormone receptor family. NR1 subfamily. As to quaternary structure, binds DNA as a monomer or a homodimer. Interacts with NCOA5 coactivator, leading to a strong increase of transcription of target genes. Interacts (via N-terminus) with KAT5. Interacts (via C-terminus) with HDAC1. Interacts with ZNHIT1. Interacts with SIAH2. Post-translationally, deacetylated by HDAC1. Acetylation and deacetylation regulate its transcriptional regulatory activity. Under more reducing intracellular redox conditions, Cys-384 is in its heme-bound state, which is optimal for recruitment of the NCOR1/HDAC3 corepressor complex and repression of target genes. When subjected to oxidative stress conditions, Cys-384 undergoes oxidation to form a disulfide bridge with Cys-374, also triggering a ligand switch that results in release of bound heme and derepression of target genes. In terms of processing, ubiquitinated by SIAH2; leading to proteasomal degradation. Post-translationally, phosphorylated by CSNK1E; phosphorylation enhances its cytoplasmic localization. Widely expressed. Expressed at high levels in the liver, adipose tissue, skeletal muscle and brain. Expression oscillates diurnally in the suprachiasmatic nucleus (SCN) of the hypothalamus as well as in peripheral tissues.

It is found in the nucleus. The protein localises to the cytoplasm. The heme-bound form can bind gaseous signaling molecules such as CO and nitric oxide (NO) and NO can reverse its transcriptional repressor activity. Its function is as follows. Transcriptional repressor which coordinates circadian rhythm and metabolic pathways in a heme-dependent manner. Integral component of the complex transcription machinery that governs circadian rhythmicity and forms a critical negative limb of the circadian clock by directly repressing the expression of core clock components BMAL1 and CLOCK. Also regulates genes involved in metabolic functions, including lipid metabolism and the inflammatory response. Acts as a receptor for heme which stimulates its interaction with the NCOR1/HDAC3 corepressor complex, enhancing transcriptional repression. Recognizes two classes of DNA response elements within the promoter of its target genes and can bind to DNA as either monomers or homodimers, depending on the nature of the response element. Binds as a monomer to a response element composed of the consensus half-site motif 5'-[A/G]GGTCA-3' preceded by an A/T-rich 5' sequence (RevRE), or as a homodimer to a direct repeat of the core motif spaced by two nuclegotides (RevDR-2). Acts as a potent competitive repressor of ROR alpha (RORA) function and also negatively regulates the expression of NR1D1. Regulates lipid and energy homeostasis in the skeletal muscle via repression of genes involved in lipid metabolism and myogenesis including: CD36, FABP3, FABP4, UCP3, SCD1 and MSTN. Regulates hepatic lipid metabolism via the repression of APOC3. Represses gene expression at a distance in macrophages by inhibiting the transcription of enhancer-derived RNAs (eRNAs). In addition to its activity as a repressor, can also act as a transcriptional activator. Acts as a transcriptional activator of the sterol regulatory element-binding protein 1 (SREBF1) and the inflammatory mediator interleukin-6 (IL6) in the skeletal muscle. Plays a role in the regulation of circadian sleep/wake cycle; essential for maintaining wakefulness during the dark phase or active period. Key regulator of skeletal muscle mitochondrial function; negatively regulates the skeletal muscle expression of core clock genes and genes involved in mitochondrial biogenesis, fatty acid beta-oxidation and lipid metabolism. May play a role in the circadian control of neutrophilic inflammation in the lung. This Homo sapiens (Human) protein is Nuclear receptor subfamily 1 group D member 2.